The following is a 213-amino-acid chain: ATP synthase subunit delta 2 (213 aa).

It belongs to the ATPase delta chain family. As to quaternary structure, F-type ATPases have 2 components, F(1) - the catalytic core - and F(0) - the membrane proton channel. F(1) has five subunits: alpha(3), beta(3), gamma(1), delta(1), epsilon(1). F(0) has three main subunits: a(1), b(2) and c(10-14). The alpha and beta chains form an alternating ring which encloses part of the gamma chain. F(1) is attached to F(0) by a central stalk formed by the gamma and epsilon chains, while a peripheral stalk is formed by the delta and b chains.

The protein resides in the cell inner membrane. Functionally, f(1)F(0) ATP synthase produces ATP from ADP in the presence of a proton or sodium gradient. F-type ATPases consist of two structural domains, F(1) containing the extramembraneous catalytic core and F(0) containing the membrane proton channel, linked together by a central stalk and a peripheral stalk. During catalysis, ATP synthesis in the catalytic domain of F(1) is coupled via a rotary mechanism of the central stalk subunits to proton translocation. Its function is as follows. This protein is part of the stalk that links CF(0) to CF(1). It either transmits conformational changes from CF(0) to CF(1) or is implicated in proton conduction. The chain is ATP synthase subunit delta 2 from Brachyspira hyodysenteriae (strain ATCC 49526 / WA1).